The following is a 169-amino-acid chain: Disulfide bond formation protein B 1 (169 aa).

Over Met-1–Tyr-14 the chain is Cytoplasmic. A helical transmembrane segment spans residues Leu-15–Tyr-31. Residues Met-32–Tyr-49 are Periplasmic-facing. Cys-41 and Cys-44 are oxidised to a cystine. A helical membrane pass occupies residues Ala-50–Met-64. The Cytoplasmic portion of the chain corresponds to Arg-65–Thr-71. The chain crosses the membrane as a helical span at residues Val-72–Gly-89. The Periplasmic portion of the chain corresponds to His-90–Gln-144. The cysteines at positions 102 and 130 are disulfide-linked. Residues Trp-145–Arg-163 traverse the membrane as a helical segment. At Asn-164 to Arg-169 the chain is on the cytoplasmic side.

This sequence belongs to the DsbB family.

It localises to the cell inner membrane. In terms of biological role, required for disulfide bond formation in some periplasmic proteins. Acts by oxidizing the DsbA protein. The polypeptide is Disulfide bond formation protein B 1 (Pseudomonas fluorescens (strain Pf0-1)).